The following is a 944-amino-acid chain: Protein translocase subunit SecA (944 aa).

ATP is bound by residues Q77, 95–99, and D484; that span reads GEGKT. The disordered stretch occupies residues 920–944; the sequence is EQEKQTKKKKKKKPHDDETTKVKIG. Basic and acidic residues predominate over residues 933–944; that stretch reads PHDDETTKVKIG.

Belongs to the SecA family. In terms of assembly, monomer and homodimer. Part of the essential Sec protein translocation apparatus which comprises SecA, SecYEG and auxiliary proteins SecDF. Other proteins may also be involved.

The protein localises to the cell membrane. Its subcellular location is the cytoplasm. The enzyme catalyses ATP + H2O + cellular proteinSide 1 = ADP + phosphate + cellular proteinSide 2.. In terms of biological role, part of the Sec protein translocase complex. Interacts with the SecYEG preprotein conducting channel. Has a central role in coupling the hydrolysis of ATP to the transfer of proteins into and across the cell membrane, serving as an ATP-driven molecular motor driving the stepwise translocation of polypeptide chains across the membrane. In Mycoplasma capricolum subsp. capricolum (strain California kid / ATCC 27343 / NCTC 10154), this protein is Protein translocase subunit SecA.